Consider the following 661-residue polypeptide: Chermesin D/asnovolin J monooxidase nvfH (661 aa).

N-linked (GlcNAc...) asparagine glycosylation occurs at asparagine 12. Residues 89–111 (VLIIGAGYGGLLFAVRIIQTGAF) form a helical membrane-spanning segment. Residues 128–131 (TWYW), 140–141 (DV), and tyrosine 146 contribute to the FAD site. An NADP(+)-binding site is contributed by 138 to 140 (MCD). Residues 286–292 (TGATAIQ) and 309–310 (RT) each bind NADP(+). N-linked (GlcNAc...) asparagine glycosylation is found at asparagine 382 and asparagine 538.

It belongs to the FAD-binding monooxygenase family. FAD serves as cofactor.

The protein localises to the membrane. The enzyme catalyses chermesin D + AH2 + O2 = asnovolin I + A + H2O. It carries out the reaction asnovolin J + AH2 + O2 = asnovolin A + A + H2O. It participates in secondary metabolite biosynthesis; terpenoid biosynthesis. In terms of biological role, chermesin D/asnovolin J monooxidase; part of the gene cluster that mediates the biosynthesis of novofumigatonin, a heavily oxygenated meroterpenoid containing a unique orthoester moiety. The first step of the pathway is the synthesis of 3,5-dimethylorsellinic acid (DMOA) by the polyketide synthase nvfA via condensation of one acetyl-CoA starter unit with 3 malonyl-CoA units and 2 methylations. DMOA is then converted to farnesyl-DMOA by the farnesyltransferase nvfB. Epoxydation by FAD-dependent monooxygenase nvfK, followed by a protonation-initiated cyclization catalyzed by the terpene cyclase nvfL leads to the production of asnavolin H. The short chain dehydrogenase nvfC then as a 3-OH dehydrogenase of asnovolin H to yield chemesin D. There are two branches to synthesize asnovolin A from chemesin D. In one branch, chemesin D undergoes Baeyer-Villiger oxidation by nvfH, methylation by nvfJ, and enoyl reduction by the nvfM D enoylreductase that reduces the double bond between C-5'and C-6', to form respectively asnovolin I, asnovolin K, and asnovolin A. In the other branch, the methylation precedes the Baeyer-Villiger oxidation and the enoyl reduction to yield asnovolin A via the asnovolin J intermediate. Asnovolin A is further converted to fumigatonoid A by the Fe(II)/2-oxoglutarate-dependent dioxygenase nvfI that catalyzes an endoperoxidation reaction. The alpha/beta hydrolase nvfD then acts as an epimerase that converts fumigatonoid A to its C-5' epimer, which then undergoes spontaneous or nvfD-catalyzed lactonization. The following step utilizes the ketoreductase nvfG to produce fumigatonoid B. The dioxygenase nvfE further converts fumigatonoid B into fumigatonoid C. Finally the Fe(II)/2-oxoglutarate-dependent dioxygenase nvfF catalyzes two rounds of oxidation to transform fumigatonoid C into the end product, novofumigatonin A. The sequence is that of Chermesin D/asnovolin J monooxidase nvfH from Aspergillus novofumigatus (strain IBT 16806).